An 88-amino-acid chain; its full sequence is UPF0297 protein RBAM_024500 (88 aa).

It belongs to the UPF0297 family.

This chain is UPF0297 protein RBAM_024500, found in Bacillus velezensis (strain DSM 23117 / BGSC 10A6 / LMG 26770 / FZB42) (Bacillus amyloliquefaciens subsp. plantarum).